A 176-amino-acid chain; its full sequence is Acireductone dioxygenase (176 aa).

H91, H93, E97, and H136 together coordinate Fe(2+). The Ni(2+) site is built by H91, H93, E97, and H136.

It belongs to the acireductone dioxygenase (ARD) family. In terms of assembly, monomer. The cofactor is Fe(2+). Ni(2+) is required as a cofactor.

It catalyses the reaction 1,2-dihydroxy-5-(methylsulfanyl)pent-1-en-3-one + O2 = 3-(methylsulfanyl)propanoate + CO + formate + 2 H(+). It carries out the reaction 1,2-dihydroxy-5-(methylsulfanyl)pent-1-en-3-one + O2 = 4-methylsulfanyl-2-oxobutanoate + formate + 2 H(+). It participates in amino-acid biosynthesis; L-methionine biosynthesis via salvage pathway; L-methionine from S-methyl-5-thio-alpha-D-ribose 1-phosphate: step 5/6. Catalyzes 2 different reactions between oxygen and the acireductone 1,2-dihydroxy-3-keto-5-methylthiopentene (DHK-MTPene) depending upon the metal bound in the active site. Fe-containing acireductone dioxygenase (Fe-ARD) produces formate and 2-keto-4-methylthiobutyrate (KMTB), the alpha-ketoacid precursor of methionine in the methionine recycle pathway. Ni-containing acireductone dioxygenase (Ni-ARD) produces methylthiopropionate, carbon monoxide and formate, and does not lie on the methionine recycle pathway. This chain is Acireductone dioxygenase, found in Picosynechococcus sp. (strain ATCC 27264 / PCC 7002 / PR-6) (Agmenellum quadruplicatum).